The following is a 35-amino-acid chain: Photosystem II reaction center protein T (35 aa).

Residues 3-23 (ALVYTFLLVSTLGIIFFAIFF) form a helical membrane-spanning segment.

The protein belongs to the PsbT family. PSII is composed of 1 copy each of membrane proteins PsbA, PsbB, PsbC, PsbD, PsbE, PsbF, PsbH, PsbI, PsbJ, PsbK, PsbL, PsbM, PsbT, PsbY, PsbZ, Psb30/Ycf12, at least 3 peripheral proteins of the oxygen-evolving complex and a large number of cofactors. It forms dimeric complexes.

It localises to the plastid. It is found in the chloroplast thylakoid membrane. Found at the monomer-monomer interface of the photosystem II (PS II) dimer, plays a role in assembly and dimerization of PSII. PSII is a light-driven water plastoquinone oxidoreductase, using light energy to abstract electrons from H(2)O, generating a proton gradient subsequently used for ATP formation. This is Photosystem II reaction center protein T from Metasequoia glyptostroboides (Dawn redwood).